A 428-amino-acid chain; its full sequence is Aerobic C4-dicarboxylate transport protein (428 aa).

8 consecutive transmembrane segments (helical) span residues 5 to 27, 47 to 64, 77 to 99, 141 to 163, 184 to 206, 219 to 241, 326 to 348, and 352 to 374; these read LFKSLYFQVLTAIAIGILLGHFY, MIIAPVIFCTVVTGIAGM, ALLYFEIVSTIALIIGLIIVNVV, VIGAFASGNILQVLLFAVLFGFA, VIFGIINMIMRLAPIGAFGAMAF, LGQLIICFYITCILFVVLVLGSI, IVHQITLLIVLLLSSKGAAGVTG, and IVLAATLSAVGHLPVAGLALILG.

It belongs to the dicarboxylate/amino acid:cation symporter (DAACS) (TC 2.A.23) family.

Its subcellular location is the cell inner membrane. Its function is as follows. Responsible for the aerobic transport of the dicarboxylates fumarate and malate and to a lesser extent succinate, from the periplasm across the inner membrane. The protein is Aerobic C4-dicarboxylate transport protein of Escherichia coli O157:H7.